Here is a 209-residue protein sequence, read N- to C-terminus: Guanylate kinase (209 aa).

Residues 9 to 188 (GIMLVISSPS…SVYQIKCIFT (180 aa)) enclose the Guanylate kinase-like domain. An ATP-binding site is contributed by 16–23 (SPSGGGKT).

It belongs to the guanylate kinase family.

Its subcellular location is the cytoplasm. The enzyme catalyses GMP + ATP = GDP + ADP. Functionally, essential for recycling GMP and indirectly, cGMP. The polypeptide is Guanylate kinase (Ehrlichia chaffeensis (strain ATCC CRL-10679 / Arkansas)).